Reading from the N-terminus, the 506-residue chain is Maturase K (506 aa).

This sequence belongs to the intron maturase 2 family. MatK subfamily.

The protein localises to the plastid. It localises to the chloroplast. Functionally, usually encoded in the trnK tRNA gene intron. Probably assists in splicing its own and other chloroplast group II introns. The chain is Maturase K from Phyllodoce empetriformis (Pink mountainheath).